The sequence spans 694 residues: N,N-dimethylglycine/sarcosine dehydrogenase (694 aa).

In the N-terminal section; belongs to the NADH:flavin oxidoreductase/NADH oxidase family. Monomer. The purified enzyme exists in the form of a monomer, dimer or polymer under non-denaturing conditions, but only the monomeric protein exhibits enzyme activity. FAD serves as cofactor. It depends on NAD(+) as a cofactor. The cofactor is NADP(+).

The protein localises to the cytoplasm. The catalysed reaction is oxidized 2[4Fe-4S]-[ferredoxin] + N,N-dimethylglycine + H2O = reduced 2[4Fe-4S]-[ferredoxin] + sarcosine + formaldehyde + 2 H(+). The enzyme catalyses oxidized 2[4Fe-4S]-[ferredoxin] + sarcosine + H2O = reduced 2[4Fe-4S]-[ferredoxin] + formaldehyde + glycine + 2 H(+). Its activity is regulated as follows. Ca(2+) increases the activity by 12%, while the other metal ions tested have no or slightly inhibitory effects. The chelating agent EDTA inhibits the activity by 33%. Involved in degradation of glycine betaine. Catalyzes the demethylation of both N,N-dimethylglycine (DMG) and sarcosine, releasing formaldehyde and forming glycine as the final product. Does not show activity toward trimethylamine (TMA), histamine, glycine betaine (GB) or choline. The C-N bond in DMG is probably oxidized by removal of a hydride equivalent to form a labile imine intermediate, which is then spontaneously hydrolyzed in the presence of water, producing sarcosine and formaldehyde. The two protons subtracted from DMG are transferred to the non-covalently bound FAD, resulting in the reduced form of FAD, which is subsequently reoxidized by coupling with reduction of the enzyme-bound NAD(P)(+). Regeneration of NAD(P)(+) is achieved by electron transfer to the [4Fe-4S] cluster in the probable membrane-anchored ferredoxin csal_0991. In Chromohalobacter salexigens (strain ATCC BAA-138 / DSM 3043 / CIP 106854 / NCIMB 13768 / 1H11), this protein is N,N-dimethylglycine/sarcosine dehydrogenase.